Reading from the N-terminus, the 702-residue chain is Amino-acid racemase (702 aa).

Over 1–12 (MKHRANGIDLFR) the chain is Cytoplasmic. A helical membrane pass occupies residues 13 to 33 (IFAATMVVAIHTFPFQSIAPF). The Extracellular portion of the chain corresponds to 34–39 (LDEVIT). The chain crosses the membrane as a helical span at residues 40–60 (LTVFRVAVPFFFMITGYFLLG). The Cytoplasmic segment spans residues 61 to 77 (RLSLNFSYNNNQRVKKY). The chain crosses the membrane as a helical span at residues 78–98 (LYKIGMIYLYSILLYFPLSLL). The Extracellular segment spans residues 99-120 (NGTISLKMNILLLLKVFIFDGT). Residues 121–141 (FYHLWYFPASIIGTILVTLLL) form a helical membrane-spanning segment. Position 142 (R142) is a topological domain, cytoplasmic. Residues 143–163 (SIGFKLTVAFSTCLYLVGLGG) form a helical membrane-spanning segment. Topologically, residues 164-191 (DSWYGITNQVPLLNKLYTFIFSWSDYTR) are extracellular. Residues 192–212 (SGVFFTPVFLCLGIFAYRVSK) form a helical membrane-spanning segment. The Cytoplasmic segment spans residues 213-218 (KLTASK). A helical transmembrane segment spans residues 219–239 (ILNLLFYVFIIGMTFESIFLH). Topologically, residues 240–248 (RFTNVKHDS) are extracellular. The helical transmembrane segment at 249 to 269 (MYLLLPSCALILFLMLLNWQP) threads the bilayer. The Cytoplasmic segment spans residues 270–276 (KLKVKES). Residues 277–297 (ADLTLLVYILHPLVIVIVHSI) form a helical membrane-spanning segment. The Extracellular segment spans residues 298–307 (SKYIPILKNS). The chain crosses the membrane as a helical span at residues 308 to 328 (LLNFLLVVVCSFILAQLLLNL). Over 329-702 (KRKLRVSKQK…LGSRLGTELN (374 aa)) the chain is Cytoplasmic. The tract at residues 337–702 (QKIPFERASK…LGSRLGTELN (366 aa)) is racemase. The active-site Proton acceptor is the K375. An N6-(pyridoxal phosphate)lysine modification is found at K375. Substrate is bound at residue R469. Y601 functions as the Proton acceptor in the catalytic mechanism. A substrate-binding site is contributed by M650.

In the N-terminal section; belongs to the acyltransferase 3 family. The protein in the C-terminal section; belongs to the alanine racemase family. Requires pyridoxal 5'-phosphate as cofactor.

The protein localises to the cell membrane. This Enterococcus faecalis (Streptococcus faecalis) protein is Amino-acid racemase (vanTE).